A 175-amino-acid polypeptide reads, in one-letter code: ATP synthase subunit b (175 aa).

Residues 20-40 (LIFWTAVTFVIVLVILKKIAW) form a helical membrane-spanning segment.

It belongs to the ATPase B chain family. In terms of assembly, F-type ATPases have 2 components, F(1) - the catalytic core - and F(0) - the membrane proton channel. F(1) has five subunits: alpha(3), beta(3), gamma(1), delta(1), epsilon(1). F(0) has four main subunits: a(1), b(2) and c(10-14). The alpha and beta chains form an alternating ring which encloses part of the gamma chain. F(1) is attached to F(0) by a central stalk formed by the gamma and epsilon chains, while a peripheral stalk is formed by the delta and b chains.

It localises to the cell inner membrane. F(1)F(0) ATP synthase produces ATP from ADP in the presence of a proton or sodium gradient. F-type ATPases consist of two structural domains, F(1) containing the extramembraneous catalytic core and F(0) containing the membrane proton channel, linked together by a central stalk and a peripheral stalk. During catalysis, ATP synthesis in the catalytic domain of F(1) is coupled via a rotary mechanism of the central stalk subunits to proton translocation. Its function is as follows. Component of the F(0) channel, it forms part of the peripheral stalk, linking F(1) to F(0). In Chlorobaculum parvum (strain DSM 263 / NCIMB 8327) (Chlorobium vibrioforme subsp. thiosulfatophilum), this protein is ATP synthase subunit b.